Consider the following 76-residue polypeptide: Large ribosomal subunit protein uL29 (76 aa).

This sequence belongs to the universal ribosomal protein uL29 family.

This Corynebacterium aurimucosum (strain ATCC 700975 / DSM 44827 / CIP 107346 / CN-1) (Corynebacterium nigricans) protein is Large ribosomal subunit protein uL29.